Consider the following 179-residue polypeptide: Large ribosomal subunit protein uL5 (179 aa).

This sequence belongs to the universal ribosomal protein uL5 family. Part of the 50S ribosomal subunit; part of the 5S rRNA/L5/L18/L25 subcomplex. Contacts the 5S rRNA and the P site tRNA. Forms a bridge to the 30S subunit in the 70S ribosome.

In terms of biological role, this is one of the proteins that bind and probably mediate the attachment of the 5S RNA into the large ribosomal subunit, where it forms part of the central protuberance. In the 70S ribosome it contacts protein S13 of the 30S subunit (bridge B1b), connecting the 2 subunits; this bridge is implicated in subunit movement. Contacts the P site tRNA; the 5S rRNA and some of its associated proteins might help stabilize positioning of ribosome-bound tRNAs. This is Large ribosomal subunit protein uL5 from Caldanaerobacter subterraneus subsp. tengcongensis (strain DSM 15242 / JCM 11007 / NBRC 100824 / MB4) (Thermoanaerobacter tengcongensis).